An 843-amino-acid chain; its full sequence is Lon protease (843 aa).

Basic and acidic residues predominate over residues 1–16; sequence MRERKETAMSDKEKKG. Positions 1–22 are disordered; the sequence is MRERKETAMSDKEKKGAGAGAQ. Residues 42 to 236 form the Lon N-terminal domain; the sequence is LPILPLRNSV…LVLELLNRKR (195 aa). Residue 388 to 395 coordinates ATP; the sequence is GPPGVGKT. Residues 627 to 808 form the Lon proteolytic domain; it reads TEIAGVATGL…DEVLQAALEE (182 aa). Active-site residues include Ser714 and Lys757. A disordered region spans residues 805-843; that stretch reads ALEENPVGRKPPAAPEPEGEKKPGATPTPPAKKPDEIRV.

Belongs to the peptidase S16 family. In terms of assembly, homohexamer. Organized in a ring with a central cavity.

It localises to the cytoplasm. The enzyme catalyses Hydrolysis of proteins in presence of ATP.. In terms of biological role, ATP-dependent serine protease that mediates the selective degradation of mutant and abnormal proteins as well as certain short-lived regulatory proteins. Required for cellular homeostasis and for survival from DNA damage and developmental changes induced by stress. Degrades polypeptides processively to yield small peptide fragments that are 5 to 10 amino acids long. Binds to DNA in a double-stranded, site-specific manner. This chain is Lon protease, found in Anaeromyxobacter dehalogenans (strain 2CP-C).